The following is a 918-amino-acid chain: E3 ubiquitin-protein ligase CBL-B-A (918 aa).

A compositionally biased stretch (low complexity) spans 1–18 (MASGSGSSSSTSSSALSG). The segment at 1–27 (MASGSGSSSSTSSSALSGRLPGSRSAN) is disordered. Residues 46–178 (PPKQAAADRR…KAIFPSGQFQ (133 aa)) form a 4H region. Residues 46 to 354 (PPKQAAADRR…GRSYNPDLTG (309 aa)) enclose the Cbl-PTB domain. Residues 179–251 (GDNFRITKAD…FEFDIFTRLF (73 aa)) are EF-hand-like. Ca(2+) contacts are provided by D232, T234, N236, Y238, and E243. The SH2-like stretch occupies residues 252–354 (QPWGSILRNW…GRSYNPDLTG (103 aa)). Residue R297 participates in 4-O-phospho-L-tyrosine binding. Positions 355–383 (LCEPTPHDHIKVTQEQYELYCEMGSTFQL) are linker. An RING-type zinc finger spans residues 384–423 (CKICAENDKDVKIEPCGHLMCTSCLTSWQESDGQGCPFCR). Disordered stretches follow at residues 481–582 (NERQ…RTCR), 780–831 (FPPA…PPAR), and 857–918 (HSDP…MRPT). Polar residues predominate over residues 483 to 497 (RQNSPVTSPGSSPLS). Pro residues-rich tracts occupy residues 554–576 (LPAP…PIPP) and 821–830 (PSQPPPPPPA). The span at 898–918 (KASNTKGELLLPNQNLIMRPT) shows a compositional bias: polar residues.

Interacts with several SH3 domain-containing proteins and with poly-ubiquitinated proteins.

It is found in the cytoplasm. It catalyses the reaction S-ubiquitinyl-[E2 ubiquitin-conjugating enzyme]-L-cysteine + [acceptor protein]-L-lysine = [E2 ubiquitin-conjugating enzyme]-L-cysteine + N(6)-ubiquitinyl-[acceptor protein]-L-lysine.. The protein operates within protein modification; protein ubiquitination. E3 ubiquitin-protein ligase which accepts ubiquitin from specific E2 ubiquitin-conjugating enzymes, and transfers it to substrates, generally promoting their degradation by the proteasome. This chain is E3 ubiquitin-protein ligase CBL-B-A (cblb-a), found in Xenopus laevis (African clawed frog).